Reading from the N-terminus, the 541-residue chain is Carotenoid-cleaving dioxygenase, mitochondrial (541 aa).

4 residues coordinate Fe cation: H188, H248, H319, and H535.

The protein belongs to the carotenoid oxygenase family. It depends on Fe(2+) as a cofactor. As to expression, widely expressed. Detected in heart, spleen, lung, intestine, colon, stomach, kidney, bladder, and prostate. Highly expressed in liver and testis (at protein level).

The protein localises to the mitochondrion. The enzyme catalyses all-trans-beta-carotene + O2 = beta-ionone + all-trans-10'-apo-beta-carotenal. It carries out the reaction 5-cis-lycopene + O2 = 5-cis-10'-apo-lycopenal + (3E,5E)-6,10-dimethylundeca-3,5,9-trien-2-one. It catalyses the reaction 13-cis-lycopene + O2 = 13-cis-10'-apo-lycopenal + (3E,5E)-6,10-dimethylundeca-3,5,9-trien-2-one. The catalysed reaction is lutein + O2 = (3R,6R)-hydroxy-alpha-ionone + (3R)-3-hydroxy-10'-apo-beta-carotenal. The enzyme catalyses lutein + O2 = (3R,6R)-3-hydroxy-10'-apo-alpha-carotenal + (3R)-hydroxy-beta-ionone. It carries out the reaction all-trans-zeaxanthin + 2 O2 = 4,9-dimethyldodeca-2,4,6,8,10-pentaenedial + 2 (3R)-hydroxy-beta-ionone. It catalyses the reaction all-trans-zeaxanthin + O2 = (3R)-3-hydroxy-10'-apo-beta-carotenal + (3R)-hydroxy-beta-ionone. The catalysed reaction is beta-cryptoxanthin + O2 = all-trans-10'-apo-beta-carotenal + (3R)-hydroxy-beta-ionone. The enzyme catalyses all-trans-10'-apo-beta-carotenal + O2 = beta-ionone + 4,9-dimethyldodeca-2,4,6,8,10-pentaenedial. It carries out the reaction (3R)-3-hydroxy-10'-apo-beta-carotenal + O2 = 4,9-dimethyldodeca-2,4,6,8,10-pentaenedial + (3R)-hydroxy-beta-ionone. It catalyses the reaction (3R,6R)-3-hydroxy-10'-apo-alpha-carotenal + O2 = (3R,6R)-hydroxy-alpha-ionone + 4,9-dimethyldodeca-2,4,6,8,10-pentaenedial. Broad specificity mitochondrial dioxygenase that mediates the asymmetric oxidative cleavage of carotenoids. Cleaves carotenes (pure hydrocarbon carotenoids) such as all-trans-beta-carotene and lycopene as well as xanthophylls (oxygenated carotenoids) such as zeaxanthin, lutein and beta-cryptoxanthin at both the 9,10 and the 9',10' carbon-carbon double bond. Through its function in carotenoids metabolism regulates oxidative stress and the production of important signaling molecules. The sequence is that of Carotenoid-cleaving dioxygenase, mitochondrial from Mustela putorius furo (European domestic ferret).